Here is a 94-residue protein sequence, read N- to C-terminus: Integration host factor subunit beta (94 aa).

It belongs to the bacterial histone-like protein family. Heterodimer of an alpha and a beta chain.

This protein is one of the two subunits of integration host factor, a specific DNA-binding protein that functions in genetic recombination as well as in transcriptional and translational control. This Mesorhizobium japonicum (strain LMG 29417 / CECT 9101 / MAFF 303099) (Mesorhizobium loti (strain MAFF 303099)) protein is Integration host factor subunit beta.